A 350-amino-acid polypeptide reads, in one-letter code: Glycerol-1-phosphate dehydrogenase [NAD(P)+] (350 aa).

Residues 97–101 (GSKID) and 119–122 (TTPS) contribute to the NAD(+) site. Aspartate 124 contributes to the substrate binding site. Serine 128 serves as a coordination point for NAD(+). Substrate is bound at residue aspartate 171. Residues aspartate 171 and histidine 251 each contribute to the Zn(2+) site. Histidine 255 provides a ligand contact to substrate. Zn(2+) is bound at residue histidine 267.

Belongs to the glycerol-1-phosphate dehydrogenase family. Zn(2+) serves as cofactor.

The protein localises to the cytoplasm. The enzyme catalyses sn-glycerol 1-phosphate + NAD(+) = dihydroxyacetone phosphate + NADH + H(+). The catalysed reaction is sn-glycerol 1-phosphate + NADP(+) = dihydroxyacetone phosphate + NADPH + H(+). It participates in membrane lipid metabolism; glycerophospholipid metabolism. In terms of biological role, catalyzes the NAD(P)H-dependent reduction of dihydroxyacetonephosphate (DHAP or glycerone phosphate) to glycerol 1-phosphate (G1P). The G1P thus generated is used as the glycerophosphate backbone of phospholipids in the cellular membranes of Archaea. The chain is Glycerol-1-phosphate dehydrogenase [NAD(P)+] from Picrophilus torridus (strain ATCC 700027 / DSM 9790 / JCM 10055 / NBRC 100828 / KAW 2/3).